A 542-amino-acid polypeptide reads, in one-letter code: MLGHRLLPSLDFPAVSEGYKPEHDMSPNKDASSLNSSAAGLVCLPPVSEELQLVWTQAIQTSELDGNEHLLQAFSYFPYPSLADIALLCLRHGLQMEKVKTWFMAQRLRCGISWSSEEIEETRARVVYHRDQLLFKSLLSFTQQSVRPPQERPPVLRPEQVALGLSPLAPSEQPTHMKGLKVEPEEPSQVSQLPLNHQNAKEPLMMGSRTFSHQSDCQDLQISGLSKEQAGRGPDQSCGKTASWNHFTAVHQPDKPASVSLLDNSCKEESEPSGIPPSSSTSSPSFQALANGTTATPKPLQPLGCISQSLSPSKKALSPQVEPLWPQRLWNNSEPNSAGPTEYLSPDMQHQRKTKRKTKEQLAILKSFFLQCQWARREDYHKLEQITGLPRPEIIQWFGDTRYALKHGQLKWFRDNAVLGTPSFQDPAIPTPSTRSLKEWAKTPPLPAPPPPPDIRPLEKYWAAHQQLQEADILKLSQASRLSTQQVLDWFDSRLPKPAEVVVCLDEEDEEDEEDELPEDGEEEEEEEEDDDDGDDDVIIWD.

Positions 55 to 114 form a DNA-binding region, homeobox 1; sequence WTQAIQTSELDGNEHLLQAFSYFPYPSLADIALLCLRHGLQMEKVKTWFMAQRLRCGISW. The interval 165–193 is disordered; sequence LSPLAPSEQPTHMKGLKVEPEEPSQVSQL. Glycyl lysine isopeptide (Lys-Gly) (interchain with G-Cter in SUMO2) cross-links involve residues lysine 181 and lysine 201. The segment at 250 to 307 is disordered; it reads VHQPDKPASVSLLDNSCKEESEPSGIPPSSSTSSPSFQALANGTTATPKPLQPLGCIS. A compositionally biased stretch (low complexity) spans 272–285; sequence PSGIPPSSSTSSPS. The span at 286 to 296 shows a compositional bias: polar residues; that stretch reads FQALANGTTAT. Position 345 is a phosphoserine (serine 345). 2 DNA-binding regions (homeobox) span residues 349 to 409 and 443 to 502; these read QHQR…KHGQ and TPPL…AEVV. The Nuclear localization signal signature appears at 352–357; sequence RKTKRK. Disordered stretches follow at residues 424–454 and 501–542; these read FQDP…PPPD and VVVC…IIWD. A Phosphothreonine modification is found at threonine 443. The span at 444–454 shows a compositional bias: pro residues; sequence PPLPAPPPPPD. A compositionally biased stretch (acidic residues) spans 505 to 542; sequence LDEEDEEDEEDELPEDGEEEEEEEEDDDDGDDDVIIWD.

As to quaternary structure, homodimer or heterodimer (Potential). Interacts with HOXC8. Ubiquitous. Strongly expressed in testis.

It localises to the nucleus. Functionally, may function as a transcriptional regulator. This chain is Homeobox and leucine zipper protein Homez (Homez), found in Mus musculus (Mouse).